Reading from the N-terminus, the 161-residue chain is MPSFDIVSEVNLVEVKNALDQSNKEITNRYDFKGSDARVELADKIMTAYADSDFQLDQVKDVLLGKLAKRDVDVRCLDYAKVEKVSGNKVKQAITVKVGVETDLAKKLVRLIKDSKLKVQASIQGDAVRVSGAKRDVLQETIAMVRKEITDFPLQFNNFRE.

This sequence belongs to the YajQ family.

In terms of biological role, nucleotide-binding protein. The polypeptide is Nucleotide-binding protein LHK_01423 (Laribacter hongkongensis (strain HLHK9)).